The chain runs to 592 residues: Cell division protein FtsZ (592 aa).

GTP contacts are provided by residues 24-28 (GGGGN), 111-113 (GTG), E142, R146, and D190. The interval 333 to 362 (KFQKSVSSVRKNDSGINQTASHPQSSQLRS) is disordered.

The protein belongs to the FtsZ family. In terms of assembly, homodimer. Polymerizes to form a dynamic ring structure in a strictly GTP-dependent manner. Interacts directly with several other division proteins.

The protein resides in the cytoplasm. Essential cell division protein that forms a contractile ring structure (Z ring) at the future cell division site. The regulation of the ring assembly controls the timing and the location of cell division. One of the functions of the FtsZ ring is to recruit other cell division proteins to the septum to produce a new cell wall between the dividing cells. Binds GTP and shows GTPase activity. In Bartonella bacilliformis, this protein is Cell division protein FtsZ.